We begin with the raw amino-acid sequence, 265 residues long: 4-hydroxy-tetrahydrodipicolinate reductase (265 aa).

Residues 7 to 12, Asp33, 96 to 98, and 120 to 123 each bind NAD(+); these read GASGRM, GTT, and AANM. The active-site Proton donor/acceptor is His153. Residue His154 coordinates (S)-2,3,4,5-tetrahydrodipicolinate. The active-site Proton donor is Lys157. 163 to 164 is a binding site for (S)-2,3,4,5-tetrahydrodipicolinate; sequence GT.

The protein belongs to the DapB family.

Its subcellular location is the cytoplasm. The enzyme catalyses (S)-2,3,4,5-tetrahydrodipicolinate + NAD(+) + H2O = (2S,4S)-4-hydroxy-2,3,4,5-tetrahydrodipicolinate + NADH + H(+). It catalyses the reaction (S)-2,3,4,5-tetrahydrodipicolinate + NADP(+) + H2O = (2S,4S)-4-hydroxy-2,3,4,5-tetrahydrodipicolinate + NADPH + H(+). The protein operates within amino-acid biosynthesis; L-lysine biosynthesis via DAP pathway; (S)-tetrahydrodipicolinate from L-aspartate: step 4/4. Catalyzes the conversion of 4-hydroxy-tetrahydrodipicolinate (HTPA) to tetrahydrodipicolinate. The polypeptide is 4-hydroxy-tetrahydrodipicolinate reductase (Cupriavidus pinatubonensis (strain JMP 134 / LMG 1197) (Cupriavidus necator (strain JMP 134))).